Reading from the N-terminus, the 117-residue chain is Appetite-regulating hormone (117 aa).

Residues 1–23 (MPSPGTVCSLLLFSMLWADLAMA) form the signal peptide. Serine 26 carries the O-decanoyl serine; alternate lipid modification. Serine 26 carries the O-hexanoyl serine; alternate lipid modification. Serine 26 carries O-octanoyl serine; alternate lipidation. Residues 29–52 (SPEHQKVQQRKESKKPPAKLQPRA) are disordered. Residues 31 to 43 (EHQKVQQRKESKK) show a composition bias toward basic and acidic residues. A propeptide spans 52-75 (ALEGLIHPEDTSQVEGAEDELEIR) (removed in mature form). Leucine 98 bears the Leucine amide mark. A propeptide spans 99 to 117 (GKFLQDVLWEEADEVLADE) (removed in mature form).

It belongs to the motilin family. In terms of processing, O-octanoylated by GOAT/MBOAT4. O-octanoylation or O-decanoylation is essential for ghrelin activity. The O-decanoylated forms Ghrelin-27-C10 and Ghrelin-28-C10 differ in the length of the carbon backbone of the carboxylic acid bound to Ser-26. A small fraction of ghrelin, ghrelin-27-C10:1, ghrelin-27-C10:2, ghrelin-28-C8:1, ghrelin-28-C10:1, and ghrelin-28-C10:2, may be modified with singly or doubly unsaturated carboxylic acids. Post-translationally, amidation of Leu-98 is essential for obestatin activity.

Its subcellular location is the secreted. Its function is as follows. Ghrelin is the ligand for growth hormone secretagogue receptor type 1 (GHSR). Induces the release of growth hormone from the pituitary. Has an appetite-stimulating effect, induces adiposity and stimulates gastric acid secretion. Involved in growth regulation. Functionally, obestatin may be the ligand for GPR39. May have an appetite-reducing effect resulting in decreased food intake. May reduce gastric emptying activity and jejunal motility. This Felis catus (Cat) protein is Appetite-regulating hormone (GHRL).